The sequence spans 235 residues: Secretory carrier-associated membrane protein 5B (235 aa).

Residues 1–39 (MSDKPNNFPPLPRFIPLKPCFYQDFDTDIPDVHRTTAKR) are Cytoplasmic-facing. The chain crosses the membrane as a helical span at residues 40–60 (LYYLWMLNSITLGVNLIGCLA). The Extracellular segment spans residues 61 to 67 (WLIGGGG). Residues 68-88 (ATNFGLAFLWLILFTPCSYVC) traverse the membrane as a helical segment. At 89–102 (WFRPIYKAFKTDSS) the chain is on the cytoplasmic side. Residues 103–125 (FNFMAFFFTFTGQLVISIIQAVG) traverse the membrane as a helical segment. Residues 126-148 (IPGWGVCGWIASISFFGTNVGSA) are Extracellular-facing. The chain crosses the membrane as a helical span at residues 149 to 169 (VVMLIPTIMFTAVAVLSFVAL). Residues 170-235 (TKVHRFYRGA…TPNYGYSNQM (66 aa)) lie on the Cytoplasmic side of the membrane.

It belongs to the SCAMP family. SCAMP5 subfamily.

It is found in the cell membrane. The protein localises to the golgi apparatus membrane. The protein resides in the golgi apparatus. It localises to the trans-Golgi network membrane. Its subcellular location is the recycling endosome membrane. It is found in the cytoplasmic vesicle. The protein localises to the secretory vesicle. The protein resides in the synaptic vesicle membrane. Required for the calcium-dependent exocytosis of signal sequence-containing cytokines. Probably acts in cooperation with the SNARE machinery. This chain is Secretory carrier-associated membrane protein 5B (scamp5-b), found in Xenopus laevis (African clawed frog).